Consider the following 312-residue polypeptide: Ornithine carbamoyltransferase (312 aa).

Residues 50 to 53 (STRT), Gln77, Arg101, and 128 to 131 (HPCQ) each bind carbamoyl phosphate. L-ornithine contacts are provided by residues Asn160, Asp224, and 228-229 (SM). Residues 264–265 (CL) and Arg292 each bind carbamoyl phosphate.

Belongs to the aspartate/ornithine carbamoyltransferase superfamily. OTCase family.

It localises to the cytoplasm. The enzyme catalyses carbamoyl phosphate + L-ornithine = L-citrulline + phosphate + H(+). The protein operates within amino-acid biosynthesis; L-arginine biosynthesis; L-arginine from L-ornithine and carbamoyl phosphate: step 1/3. Functionally, reversibly catalyzes the transfer of the carbamoyl group from carbamoyl phosphate (CP) to the N(epsilon) atom of ornithine (ORN) to produce L-citrulline. This chain is Ornithine carbamoyltransferase, found in Leifsonia xyli subsp. xyli (strain CTCB07).